A 272-amino-acid chain; its full sequence is Short-chain dehydrogenase/reductase iacC (272 aa).

NADP(+)-binding residues include isoleucine 13, aspartate 59, and asparagine 88. Residues serine 150 and tyrosine 169 each act as proton donor in the active site. Residues tyrosine 169, lysine 173, and valine 202 each contribute to the NADP(+) site. Lysine 173 (lowers pKa of active site Tyr) is an active-site residue.

Belongs to the short-chain dehydrogenases/reductases (SDR) family.

Its pathway is secondary metabolite biosynthesis. In terms of biological role, short-chain dehydrogenase/reductase; part of the gene cluster that mediates the biosynthesis of iso-A82775C, a enylepoxycyclohexane and biosynthetic precursor of the chloropestolide anticancer natural products. Within the cluster, the prenyltransferase iacE prenylates siccayne to generate pestalodiol E, using dimethylallyl diphosphate (DMAPP) as cosubstrate. The probable oxidoreductase iacF is then involved in the epoxidation of pestalodiol F to pestalodiol F, which is further converted to pestalofone A by the short-chain dehydrogenase/reductase iacG. Iso-A82775C is subsequently generated from pestalofone A by the short-chain dehydrogenase/reductase iacC. Iso-A82775C is further condensed with maldoxin via a Diels-Alder reaction to produce the anticancer natural products chloropestolides A to E. The chain is Short-chain dehydrogenase/reductase iacC from Pestalotiopsis fici (strain W106-1 / CGMCC3.15140).